The chain runs to 356 residues: Molybdenum import ATP-binding protein ModC (356 aa).

The region spanning 1-232 (MEDIHARFHI…LDLPIRLGED (232 aa)) is the ABC transporter domain. Position 33-40 (33-40 (GHSGSGKT)) interacts with ATP. In terms of domain architecture, Mop spans 291 to 356 (ETSVLNLLRG…VQVKSVALME (66 aa)).

This sequence belongs to the ABC transporter superfamily. Molybdate importer (TC 3.A.1.8) family. As to quaternary structure, the complex is composed of two ATP-binding proteins (ModC), two transmembrane proteins (ModB) and a solute-binding protein (ModA).

The protein localises to the cell inner membrane. It catalyses the reaction molybdate(out) + ATP + H2O = molybdate(in) + ADP + phosphate + H(+). Functionally, part of the ABC transporter complex ModABC involved in molybdenum import. Responsible for energy coupling to the transport system. This Methylococcus capsulatus (strain ATCC 33009 / NCIMB 11132 / Bath) protein is Molybdenum import ATP-binding protein ModC.